The sequence spans 81 residues: Small cysteine-rich protein 1 1 (81 aa).

The first 19 residues, 1–19, serve as a signal peptide directing secretion; it reads MGVHFNICLLLLLVATISS. A propeptide spanning residues 20 to 39 is cleaved from the precursor; that stretch reads QTLKATEKDDSTDENPFGIY.

The protein belongs to the Cnidaria small cysteine-rich protein (SCRiP) family. alpha subfamily. In terms of processing, the basic myotoxic domain of rattlesnake crotamine toxins (with 6 Cys residues) has been detected in this protein. However, this protein contains 2 additional Cys at the C-terminal region. Hence, this protein may contain 4 disulfide bonds instead of the 3 suggested by the myotoxin domain.

The protein localises to the secreted. The protein resides in the nematocyst. Its function is as follows. Induces neurotoxic symptoms on zebrafish. Has also been claimed to be implied in calcification, but tests on homolog proteins suggest that proteins of this family have a neurotoxic function and not a calcification function. The polypeptide is Small cysteine-rich protein 1 1 (Montipora capitata (Rice coral)).